The sequence spans 295 residues: Ribosomal protein L11 methyltransferase (295 aa).

S-adenosyl-L-methionine-binding residues include threonine 139, glycine 166, aspartate 188, and asparagine 231.

This sequence belongs to the methyltransferase superfamily. PrmA family.

The protein localises to the cytoplasm. The enzyme catalyses L-lysyl-[protein] + 3 S-adenosyl-L-methionine = N(6),N(6),N(6)-trimethyl-L-lysyl-[protein] + 3 S-adenosyl-L-homocysteine + 3 H(+). Its function is as follows. Methylates ribosomal protein L11. The chain is Ribosomal protein L11 methyltransferase from Cyanothece sp. (strain PCC 7425 / ATCC 29141).